Consider the following 206-residue polypeptide: High frequency lysogenization protein HflD homolog (206 aa).

It belongs to the HflD family.

It localises to the cytoplasm. The protein localises to the cell inner membrane. The protein is High frequency lysogenization protein HflD homolog of Pseudomonas aeruginosa (strain LESB58).